The following is a 209-amino-acid chain: uncharacterized protein (209 aa).

Residues 1–17 form the signal peptide; the sequence is MKRLVTGLLALSLFLAA. A disordered region spans residues 17-105; it reads ACGQDSDQQK…SNNQANNNQK (89 aa). Residue C18 is the site of N-palmitoyl cysteine attachment. C18 carries S-diacylglycerol cysteine lipidation. Residues 23–70 are compositionally biased toward basic and acidic residues; the sequence is DQQKDSNKEKDDKAKTEQQDEKTNDSSKDKKDKKDDSKDVNKDNKDNS. Residues 71 to 105 show a composition bias toward low complexity; the sequence is ANDNQQQSNSNATNNDQNQTNNNQSSNNQANNNQK.

It localises to the cell membrane. This is an uncharacterized protein from Staphylococcus aureus (strain bovine RF122 / ET3-1).